Here is a 337-residue protein sequence, read N- to C-terminus: Protein LEG1 homolog (337 aa).

Positions Met-1–Ala-20 are cleaved as a signal peptide. N-linked (GlcNAc...) asparagine glycosylation is present at Asn-171.

The protein belongs to the LEG1 family.

The protein localises to the secreted. Its function is as follows. May be involved in early liver development. The protein is Protein LEG1 homolog of Mus musculus (Mouse).